Reading from the N-terminus, the 653-residue chain is Cell wall adhesin EAP1 (653 aa).

Residues 1 to 18 (MKVSQILPLAGAISVASG) form the signal peptide. The interval 19-146 (FWIPDFSNKQ…EYTTYCPLTS (128 aa)) is N-terminal cell-cell adhesion domain. A disordered region spans residues 144–267 (LTSTPATEST…TETASSTPVE (124 aa)). Residues 145 to 267 (TSTPATESTP…TETASSTPVE (123 aa)) show a composition bias toward low complexity. A run of 15 repeats spans residues 147-152 (TPATES), 153-158 (TPATES), 159-164 (TPATES), 165-170 (TPATES), 171-176 (TPATES), 177-182 (TPATES), 192-197 (TPATES), 198-203 (TPATES), 204-209 (TPATES), 210-215 (TPATES), 216-221 (TPATES), 222-227 (TPATES), 228-233 (TPATES), 234-248 (TPAT…STET), and 249-254 (TPATES). Residues 147-254 (TPATESTPAT…STETTPATES (108 aa)) form a 15 X 6 AA tandem repeats, Ser/Thr-rich region. Residue asparagine 323 is glycosylated (N-linked (GlcNAc...) asparagine). Disordered regions lie at residues 324 to 540 (TSTP…TTQP) and 572 to 595 (EGGC…GPEV). 10 repeat units span residues 326–345 (TPAA…GTET), 346–365 (TPAA…GTET), 366–389 (TPAA…GTET), 390–413 (TPAA…GTET), 414–433 (TPAA…GTET), 434–457 (TPAA…GTET), 458–477 (TPAA…GTET), 478–501 (TPAA…GTET), 502–521 (TPAA…GTET), and 522–541 (TPAA…TQPV). The 10 X 20 AA approximate tandem repeats stretch occupies residues 326–541 (TPAAPGTPVE…EATPVTTQPV (216 aa)). 2 stretches are compositionally biased toward low complexity: residues 341–353 (PGTE…PGTP) and 361–538 (PGTE…PVTT). Over residues 579–590 (GQQTETSPSVPT) the composition is skewed to polar residues. Glycine 632 carries GPI-anchor amidated glycine lipidation. The propeptide at 633 to 653 (SGSALKKPYYGLAVAALVYFM) is removed in mature form.

Belongs to the PGA18 family. Post-translationally, the GPI-anchor is attached to the protein in the endoplasmic reticulum and serves to target the protein to the cell surface. There, the glucosamine-inositol phospholipid moiety is cleaved off and the GPI-modified mannoprotein is covalently attached via its lipidless GPI glycan remnant to the 1,6-beta-glucan of the outer cell wall layer.

The protein localises to the secreted. The protein resides in the cell wall. Its subcellular location is the membrane. Cell wall protein which mediates cell-cell and cell-substrate adhesion. Required for biofilm formation and plays a role in virulence. This is Cell wall adhesin EAP1 (EAP1) from Candida albicans (strain SC5314 / ATCC MYA-2876) (Yeast).